We begin with the raw amino-acid sequence, 235 residues long: Ribonuclease HII (235 aa).

Positions 23–212 constitute an RNase H type-2 domain; sequence GLVAGVDEAG…VAHVVSIARM (190 aa). Positions 29, 30, and 121 each coordinate a divalent metal cation.

Belongs to the RNase HII family. Mn(2+) is required as a cofactor. It depends on Mg(2+) as a cofactor.

It localises to the cytoplasm. The enzyme catalyses Endonucleolytic cleavage to 5'-phosphomonoester.. In terms of biological role, endonuclease that specifically degrades the RNA of RNA-DNA hybrids. The protein is Ribonuclease HII of Delftia acidovorans (strain DSM 14801 / SPH-1).